A 150-amino-acid chain; its full sequence is MMIAENAPFWRRKTLEQLSPQEWEALCDGCGLCCLQKLEDEDDNSVYYTRIACKLLDLDSCQCSDYPNRFAQVPDCIQLTPGKADQFKWLPSTCGYRLVSEGKDLPAWHHLVCGDRQQVHEQRISQSGRMLREQDVHEDDWEDHLIFRAS.

It belongs to the UPF0260 family.

This is UPF0260 protein PputGB1_4117 from Pseudomonas putida (strain GB-1).